Reading from the N-terminus, the 435-residue chain is uncharacterized protein (435 aa).

The next 12 membrane-spanning stretches (helical) occupy residues 14-34 (VSMA…GVGA), 44-64 (TFIL…KLGA), 84-104 (IITG…IALF), 123-143 (FNIA…NFFG), 153-173 (FIVL…LITI), 187-207 (VSGM…FGVI), 224-244 (AIFI…ISAI), 267-287 (FLGN…ISSA), 324-344 (LYIT…EGVA), 346-366 (ITSA…YILI), 375-395 (IVIF…YYQW), and 400-420 (FVFY…IIYR).

Its subcellular location is the cell membrane. This is an uncharacterized protein from Methanocaldococcus jannaschii (strain ATCC 43067 / DSM 2661 / JAL-1 / JCM 10045 / NBRC 100440) (Methanococcus jannaschii).